The following is a 324-amino-acid chain: MTWKGSGQETVGAEPTLWAISDLHTGHLGNKPVAESLYPSSPDDWLIVAGDVAERTDEIRWSLDLLRRRFAKVIWVPGNHELWTTNRDPMQIFGRARYDYLVNMCDEMGVVTPEHPFPVWTERGGPATIVPMFLLYDYSFLPEGANSKAEGVAIAKERNVVATDEFLLSPEPYPTRDAWCHERVAATRARLEQLDWMQPTVLVNHFPLLRQPCDALFYPEFSLWCGTTKTADWHTRYNAVCSVYGHLHIPRTTWYDGVRFEEVSVGYPREWRRRKPYSWLRQVLPDPQYAPGYLNDFGGHFVITPEMRTQAAQFRERLRQRQSR.

Mn(2+) contacts are provided by D22, H24, and D51. Positions 51, 79, 205, and 246 each coordinate Fe cation. Position 248 (H248) interacts with Mn(2+).

Belongs to the metallophosphoesterase superfamily. Requires Fe(3+) as cofactor. The cofactor is Mn(2+).

The enzyme catalyses holo-[ACP] + H2O = apo-[ACP] + (R)-4'-phosphopantetheine + H(+). Its function is as follows. Catalyzes the hydrolysis of the phosphopantetheine group from substrate holo-carrier proteins. The polypeptide is [Acyl-carrier-protein] phosphodiesterase PptH (Mycobacterium tuberculosis (strain ATCC 25618 / H37Rv)).